Here is a 323-residue protein sequence, read N- to C-terminus: tRNA dimethylallyltransferase (323 aa).

12–19 (GPTAAGKT) provides a ligand contact to ATP. Substrate is bound at residue 14 to 19 (TAAGKT). Interaction with substrate tRNA regions lie at residues 37 to 40 (DSAL) and 161 to 165 (QRLSR).

It belongs to the IPP transferase family. As to quaternary structure, monomer. Mg(2+) serves as cofactor.

It carries out the reaction adenosine(37) in tRNA + dimethylallyl diphosphate = N(6)-dimethylallyladenosine(37) in tRNA + diphosphate. In terms of biological role, catalyzes the transfer of a dimethylallyl group onto the adenine at position 37 in tRNAs that read codons beginning with uridine, leading to the formation of N6-(dimethylallyl)adenosine (i(6)A). The polypeptide is tRNA dimethylallyltransferase (Pseudomonas fluorescens (strain Pf0-1)).